Consider the following 188-residue polypeptide: Peptidyl-tRNA hydrolase (188 aa).

Tyr-14 is a tRNA binding site. The Proton acceptor role is filled by His-19. The tRNA site is built by Tyr-64, Asn-66, and Asn-112.

This sequence belongs to the PTH family. As to quaternary structure, monomer.

Its subcellular location is the cytoplasm. The catalysed reaction is an N-acyl-L-alpha-aminoacyl-tRNA + H2O = an N-acyl-L-amino acid + a tRNA + H(+). Hydrolyzes ribosome-free peptidyl-tRNAs (with 1 or more amino acids incorporated), which drop off the ribosome during protein synthesis, or as a result of ribosome stalling. In terms of biological role, catalyzes the release of premature peptidyl moieties from peptidyl-tRNA molecules trapped in stalled 50S ribosomal subunits, and thus maintains levels of free tRNAs and 50S ribosomes. This is Peptidyl-tRNA hydrolase from Bacillus licheniformis (strain ATCC 14580 / DSM 13 / JCM 2505 / CCUG 7422 / NBRC 12200 / NCIMB 9375 / NCTC 10341 / NRRL NRS-1264 / Gibson 46).